The following is a 103-amino-acid chain: Putative sulfurtransferase YtwF (103 aa).

A Rhodanese domain is found at A17 to K100. C65 functions as the Cysteine persulfide intermediate in the catalytic mechanism.

The protein is Putative sulfurtransferase YtwF (ytwF) of Bacillus subtilis (strain 168).